The following is a 478-amino-acid chain: UDP-N-acetylmuramate--L-alanine ligase (478 aa).

An ATP-binding site is contributed by Gly-122 to Thr-128.

Belongs to the MurCDEF family.

It localises to the cytoplasm. It carries out the reaction UDP-N-acetyl-alpha-D-muramate + L-alanine + ATP = UDP-N-acetyl-alpha-D-muramoyl-L-alanine + ADP + phosphate + H(+). The protein operates within cell wall biogenesis; peptidoglycan biosynthesis. Functionally, cell wall formation. The polypeptide is UDP-N-acetylmuramate--L-alanine ligase (Stenotrophomonas maltophilia (strain R551-3)).